We begin with the raw amino-acid sequence, 488 residues long: Glutamyl-tRNA(Gln) amidotransferase subunit A (488 aa).

Active-site charge relay system residues include Lys78 and Ser153. The Acyl-ester intermediate role is filled by Ser177.

Belongs to the amidase family. GatA subfamily. As to quaternary structure, heterotrimer of A, B and C subunits.

The enzyme catalyses L-glutamyl-tRNA(Gln) + L-glutamine + ATP + H2O = L-glutaminyl-tRNA(Gln) + L-glutamate + ADP + phosphate + H(+). Its function is as follows. Allows the formation of correctly charged Gln-tRNA(Gln) through the transamidation of misacylated Glu-tRNA(Gln) in organisms which lack glutaminyl-tRNA synthetase. The reaction takes place in the presence of glutamine and ATP through an activated gamma-phospho-Glu-tRNA(Gln). The chain is Glutamyl-tRNA(Gln) amidotransferase subunit A from Caldanaerobacter subterraneus subsp. tengcongensis (strain DSM 15242 / JCM 11007 / NBRC 100824 / MB4) (Thermoanaerobacter tengcongensis).